A 413-amino-acid polypeptide reads, in one-letter code: Alpha-1-antitrypsin-like protein CM55-SI (413 aa).

A signal peptide spans 1–24 (MPSSISWGLLLLAALSCLGPGSLA). Gln25 bears the Pyrrolidone carboxylic acid mark. N-linked (GlcNAc...) asparagine glycans are attached at residues Asn65, Asn102, Asn165, and Asn266. The RCL stretch occupies residues 368–387 (GGTVLGNIRSILRYEVIFDR).

The protein belongs to the serpin family. Expressed in liver.

This chain is Alpha-1-antitrypsin-like protein CM55-SI, found in Tamias sibiricus (Siberian chipmunk).